Consider the following 471-residue polypeptide: Steroid C26-monooxygenase (471 aa).

Glycine 238 contributes to the substrate binding site. Cysteine 412 lines the heme pocket.

It belongs to the cytochrome P450 family. Requires heme as cofactor.

The enzyme catalyses cholest-4-en-3-one + 6 reduced [2Fe-2S]-[ferredoxin] + 3 O2 + 5 H(+) = (25S)-3-oxocholest-4-en-26-oate + 6 oxidized [2Fe-2S]-[ferredoxin] + 4 H2O. Functionally, involved in the utilization of cholesterol as the sole carbon and energy source by degrading the side chain. Primarily catalyzes the sequential oxidation of the terminal methyl of cholest-4-en-3-one into (25S)-26-hydroxycholest-4-en-3-one (alcohol), (25S)-26-oxocholest-4-en-3-one (aldehyde), to finally yield the carboxylic acid (25S)-3-oxocholest-4-en-26-oate. Also able to sequentially oxidize cholesterol itself, not only cholest-4-en-3-one. This is Steroid C26-monooxygenase (cyp125) from Rhodococcus jostii (strain RHA1).